The sequence spans 91 residues: Small ribosomal subunit protein bS16 (91 aa).

It belongs to the bacterial ribosomal protein bS16 family.

In Exiguobacterium sibiricum (strain DSM 17290 / CCUG 55495 / CIP 109462 / JCM 13490 / 255-15), this protein is Small ribosomal subunit protein bS16.